Reading from the N-terminus, the 416-residue chain is Tyrosine--tRNA ligase (416 aa).

Y40 contributes to the L-tyrosine binding site. The 'HIGH' region signature appears at 45-54 (ATAASLHVGH). L-tyrosine contacts are provided by Y177 and Q181. The short motif at 237–241 (KMGKS) is the 'KMSKS' region element. ATP is bound at residue K240. In terms of domain architecture, S4 RNA-binding spans 351-416 (LSVAHFLVAA…RKKHKLVRLS (66 aa)).

Belongs to the class-I aminoacyl-tRNA synthetase family. TyrS type 1 subfamily. Homodimer.

The protein resides in the cytoplasm. It catalyses the reaction tRNA(Tyr) + L-tyrosine + ATP = L-tyrosyl-tRNA(Tyr) + AMP + diphosphate + H(+). Functionally, catalyzes the attachment of tyrosine to tRNA(Tyr) in a two-step reaction: tyrosine is first activated by ATP to form Tyr-AMP and then transferred to the acceptor end of tRNA(Tyr). This Cereibacter sphaeroides (strain KD131 / KCTC 12085) (Rhodobacter sphaeroides) protein is Tyrosine--tRNA ligase.